The chain runs to 136 residues: Histone H3 (136 aa).

The interval 1-43 (MARTKQTARKSTGGKAPRKQLATKAARKSAPATGGVKKPHRYR) is disordered. The residue at position 5 (Lys5) is an N6-methylated lysine. Lys10 is modified (N6-acetyllysine; alternate). Lys10 is modified (N6-methylated lysine; alternate). At Ser11 the chain carries Phosphoserine. Residues Lys15 and Lys24 each carry the N6-acetyllysine modification. N6-methylated lysine is present on residues Lys28, Lys37, and Lys80.

The protein belongs to the histone H3 family. The nucleosome is a histone octamer containing two molecules each of H2A, H2B, H3 and H4 assembled in one H3-H4 heterotetramer and two H2A-H2B heterodimers. The octamer wraps approximately 147 bp of DNA. Post-translationally, acetylation is generally linked to gene activation. In terms of processing, methylation at Lys-5 is linked to gene activation. Methylation at Lys-10 is linked to gene repression.

Its subcellular location is the nucleus. It localises to the chromosome. In terms of biological role, core component of nucleosome. Nucleosomes wrap and compact DNA into chromatin, limiting DNA accessibility to the cellular machineries which require DNA as a template. Histones thereby play a central role in transcription regulation, DNA repair, DNA replication and chromosomal stability. DNA accessibility is regulated via a complex set of post-translational modifications of histones, also called histone code, and nucleosome remodeling. The protein is Histone H3 of Platynereis dumerilii (Dumeril's clam worm).